The chain runs to 214 residues: Thymidylate kinase (214 aa).

14–21 is a binding site for ATP; sequence GLEGAGKT.

It belongs to the thymidylate kinase family.

The catalysed reaction is dTMP + ATP = dTDP + ADP. Its function is as follows. Phosphorylation of dTMP to form dTDP in both de novo and salvage pathways of dTTP synthesis. This chain is Thymidylate kinase, found in Mannheimia succiniciproducens (strain KCTC 0769BP / MBEL55E).